Consider the following 340-residue polypeptide: MAEPIDAVVLSLDEVHALALRVLTHHGLSDAHARAIANVITQGQRDECHSHGVYRLLVCVRSLRKGKVDPQAVPTLRRLSSSIVAVDAHRGFSLLSFETGLPVLVEMTKQHGIAAMVINRCYHFSALWPEVEAIAAEGLVGIAMNPSHSWVAPEGGKEPVFGTNPIAFAWPRPGGMPFVFDFATSAIARGDIELHAKQGKPIPPEWAIDAQGRPTTDPQAALQGAMRTFGGHKGSALAAMVELLGGALIGDLTSRESMDFDEGVGATPCHGELAIAFDPKVFLGDDLDAGLARGERMFDSIVAQGARLPSQRRFDARARSIANGVRIPRALYDEIVALLD.

Residue Ser-50 is the Charge relay system of the active site. His-51 serves as the catalytic Proton donor. Arg-55 is a substrate binding site. 123–127 provides a ligand contact to NADP(+); it reads HFSAL. Residue Thr-163 coordinates substrate. Residue 181–183 coordinates NADP(+); that stretch reads DFA. Residue 189–190 coordinates substrate; it reads RG. Asp-191 functions as the Charge relay system in the catalytic mechanism. Residues 232–233 and 307–313 contribute to the NADP(+) site; these read HK and RLPSQRR.

Belongs to the LDH2/MDH2 oxidoreductase family. Homodimer.

It carries out the reaction L-proline + NAD(+) = 1-pyrroline-2-carboxylate + NADH + H(+). It catalyses the reaction L-proline + NADP(+) = 1-pyrroline-2-carboxylate + NADPH + H(+). Catalyzes the reduction of Delta(1)-pyrroline-2-carboxylate (Pyr2C) to L-proline, using NADPH as the electron donor. May be involved in a degradation pathway that converts trans-3-hydroxy-L-proline (t3LHyp) to L-proline. This is Delta(1)-pyrroline-2-carboxylate reductase 2 from Burkholderia multivorans (strain ATCC 17616 / 249).